Reading from the N-terminus, the 216-residue chain is Acyl-homoserine-lactone synthase (216 aa).

The protein belongs to the autoinducer synthase family.

It carries out the reaction a fatty acyl-[ACP] + S-adenosyl-L-methionine = an N-acyl-L-homoserine lactone + S-methyl-5'-thioadenosine + holo-[ACP] + H(+). Its function is as follows. Required for the synthesis of OHHL (N-(3-oxohexanoyl)-L-homoserine lactone), an autoinducer molecule which binds to CarR and thus acts in the control of the biosynthesis of carbapenem antibiotics. The protein is Acyl-homoserine-lactone synthase (carI) of Pectobacterium carotovorum subsp. carotovorum (Erwinia carotovora subsp. carotovora).